We begin with the raw amino-acid sequence, 134 residues long: Pre-histone-like nucleoprotein (134 aa).

The propeptide occupies 2-23 (AILISPTNNTGWGLGTHKLFGG). The disordered stretch occupies residues 40–62 (RASWGSKGRRRRQGRARGAPLDP). Positions 125–134 (KRKRRVRFRQ) match the Nuclear localization signal motif.

It belongs to the adenoviridae histone-like nucleoprotein family. As to quaternary structure, interacts with the core-capsid bridging protein; this interaction bridges the virus core to the capsid. Interacts with host NPM1; this interaction might play a role in placing the pre-histone-like nucleoprotein on the viral DNA or regulating viral gene expression. Interacts with host HMGB1; this interaction inhibits host immune response. Post-translationally, cleaved near the N-terminus by the viral protease during virion maturation to form the mature protein.

It is found in the virion. The protein resides in the host nucleus. The protein localises to the host nucleolus. Plays a role in the inhibition of host immune response within the nucleus. Interacts with cellular nucleosomes and immobilizes the host immune danger signal HMGB1 on chromatin. In turn, prevents HMGB1 release out of the cell and thus decreases inflammation. Also plays a role in the wrapping and condensation of the viral DNA. May also promote viral genome import into the nucleus. The protein is Pre-histone-like nucleoprotein of Canis lupus familiaris (Dog).